The sequence spans 292 residues: Nitrogenase iron protein (292 aa).

8-15 lines the ATP pocket; that stretch reads GKGGIGKS. Cys-96 provides a ligand contact to [4Fe-4S] cluster. Arg-99 is modified (ADP-ribosylarginine; by dinitrogenase reductase ADP-ribosyltransferase). Cys-130 serves as a coordination point for [4Fe-4S] cluster.

This sequence belongs to the NifH/BchL/ChlL family. As to quaternary structure, homodimer. The cofactor is [4Fe-4S] cluster. The reversible ADP-ribosylation of Arg-99 inactivates the nitrogenase reductase and regulates nitrogenase activity.

The enzyme catalyses N2 + 8 reduced [2Fe-2S]-[ferredoxin] + 16 ATP + 16 H2O = H2 + 8 oxidized [2Fe-2S]-[ferredoxin] + 2 NH4(+) + 16 ADP + 16 phosphate + 6 H(+). In terms of biological role, the key enzymatic reactions in nitrogen fixation are catalyzed by the nitrogenase complex, which has 2 components: the iron protein and the molybdenum-iron protein. The chain is Nitrogenase iron protein from Synechococcus sp. (strain JA-3-3Ab) (Cyanobacteria bacterium Yellowstone A-Prime).